The sequence spans 485 residues: NADH-quinone oxidoreductase subunit N (485 aa).

Helical transmembrane passes span 3–23, 30–50, 67–87, 96–116, 120–140, 154–174, 202–222, 247–267, 271–291, 299–319, 332–352, 375–395, 411–431, and 453–473; these read LFMPEIIILITALLVIITDLF, HLAYLSLLGLGAAAVATVLNW, YASFFRILFISLSGLVIMASV, FQGEYYALVLLALLGMIMMAS, LITMYLSLELAGLAFYVLVGF, LLLGGVASAMLVFGLVLIYGF, FILGIILTITGLGFKVAAVPF, AAGFALFLRLFYTVFTDPLAL, WALIVAVLATAGMTLGNVLAI, MLGYSSIAHAGYILVALAAVG, LFYLVAFAVSDLVAFVSIIAI, ASALTLALLSLTGFPPLAGFL, WLMIVAAVNTVISAVFYFNVI, and LALGISGLAVLIFGIIPETLL.

Belongs to the complex I subunit 2 family. NDH-1 is composed of 14 different subunits. Subunits NuoA, H, J, K, L, M, N constitute the membrane sector of the complex.

The protein resides in the cell membrane. The enzyme catalyses a quinone + NADH + 5 H(+)(in) = a quinol + NAD(+) + 4 H(+)(out). In terms of biological role, NDH-1 shuttles electrons from NADH, via FMN and iron-sulfur (Fe-S) centers, to quinones in the respiratory chain. The immediate electron acceptor for the enzyme in this species is believed to be ubiquinone. Couples the redox reaction to proton translocation (for every two electrons transferred, four hydrogen ions are translocated across the cytoplasmic membrane), and thus conserves the redox energy in a proton gradient. The polypeptide is NADH-quinone oxidoreductase subunit N (Dehalococcoides mccartyi (strain ATCC BAA-2100 / JCM 16839 / KCTC 5957 / BAV1)).